Consider the following 740-residue polypeptide: Melanoma-associated antigen D4 (740 aa).

A compositionally biased stretch (basic and acidic residues) spans 1-11 (MAEGSYRKESE). 4 disordered regions span residues 1 to 27 (MAEGSYRKESEGYNVEDMDEGSDEVGE), 139 to 208 (ATHQ…GPST), 242 to 298 (PAGV…ALAK), and 321 to 377 (IPEP…ASQP). A compositionally biased stretch (acidic residues) spans 14 to 27 (NVEDMDEGSDEVGE). 2 stretches are compositionally biased toward polar residues: residues 141–155 (HQASGGDTQPMTSAA) and 162–175 (PETSVASPHSSRML). Low complexity predominate over residues 185–207 (APARSPQPQTSSQAQEAAAEGPS). Over residues 321 to 337 (IPEPESAAATSQQSAEP) the composition is skewed to low complexity. The span at 354-363 (DEYESGEEER) shows a compositional bias: acidic residues. Residues 414-612 (LQERANKLVK…REWRAHFLEA (199 aa)) form the MAGE domain. The tract at residues 697 to 722 (WRAGVSSGTNGAASASMLDGPSTSST) is disordered.

In terms of assembly, interacts with TRIM27.

May enhance ubiquitin ligase activity of RING-type zinc finger-containing E3 ubiquitin-protein ligases. Proposed to act through recruitment and/or stabilization of the Ubl-conjugating enzyme (E2) at the E3:substrate complex. In Bos taurus (Bovine), this protein is Melanoma-associated antigen D4 (MAGED4).